Consider the following 176-residue polypeptide: Lipoprotein signal peptidase (176 aa).

Transmembrane regions (helical) follow at residues 11–31, 38–58, 76–96, and 101–121; these read AFVA…LDQL, ATMQ…VLVF, WFFT…MHQH, and LLPA…VDRL. Active-site residues include D128 and D146. Residues 139–159 traverse the membrane as a helical segment; the sequence is WPAFNLADSAITLGVGLMLWA.

It belongs to the peptidase A8 family.

The protein localises to the cell inner membrane. It catalyses the reaction Release of signal peptides from bacterial membrane prolipoproteins. Hydrolyzes -Xaa-Yaa-Zaa-|-(S,diacylglyceryl)Cys-, in which Xaa is hydrophobic (preferably Leu), and Yaa (Ala or Ser) and Zaa (Gly or Ala) have small, neutral side chains.. It functions in the pathway protein modification; lipoprotein biosynthesis (signal peptide cleavage). This protein specifically catalyzes the removal of signal peptides from prolipoproteins. This chain is Lipoprotein signal peptidase, found in Azoarcus sp. (strain BH72).